The primary structure comprises 735 residues: Zinc finger CCCH domain-containing protein 14 (735 aa).

Met-1 is subject to N-acetylmethionine. Residues 78-153 (TEPSSLKSPD…RHSYDDGAST (76 aa)) are disordered. Ser-85 bears the Phosphoserine mark. Glycyl lysine isopeptide (Lys-Gly) (interchain with G-Cter in SUMO2) cross-links involve residues Lys-99, Lys-139, Lys-175, and Lys-198. The span at 131–144 (VSTSSQEQKSTNVR) shows a compositional bias: polar residues. Ser-240 bears the Phosphoserine mark. Residues Lys-245, Lys-283, and Lys-295 each participate in a glycyl lysine isopeptide (Lys-Gly) (interchain with G-Cter in SUMO2) cross-link. The interval 308–351 (FSHDGEEEEEDEDYGTRIGSLSSSVSVPAKPERRPSLPPSKQAN) is disordered. Phosphoserine is present on residues Ser-309, Ser-327, and Ser-343. An N6-acetyllysine; alternate modification is found at Lys-357. Residue Lys-357 forms a Glycyl lysine isopeptide (Lys-Gly) (interchain with G-Cter in SUMO2); alternate linkage. Lys-378 is covalently cross-linked (Glycyl lysine isopeptide (Lys-Gly) (interchain with G-Cter in SUMO2)). Phosphoserine occurs at positions 390 and 409. The interval 399-431 (VQGQNRAPRISPPVKEEEAKGDNTGKSQGTQQR) is disordered. Positions 412-421 (VKEEEAKGDN) are enriched in basic and acidic residues. A Glycyl lysine isopeptide (Lys-Gly) (interchain with G-Cter in SUMO2) cross-link involves residue Lys-413. Residues 422-431 (TGKSQGTQQR) are compositionally biased toward polar residues. Lys-489 is covalently cross-linked (Glycyl lysine isopeptide (Lys-Gly) (interchain with G-Cter in SUMO2)). A phosphoserine mark is found at Ser-498, Ser-515, Ser-527, and Ser-620. 5 C3H1-type zinc fingers span residues 595 to 620 (EKLLERCKYWPACKNGDECVYHHPIS), 621 to 640 (PCKAFPNCKFAEKCLFVHPN), 641 to 656 (CKYDTKCTKADCPFTH), 681 to 698 (CRYFPACKKMECPFYHPK), and 700 to 718 (CRFNTQCTRPDCTFYHPTI).

Belongs to the ZC3H14 family. As to quaternary structure, homodimer; facilitating circular RNAs (circRNAs) formation. Associates with the spliceosome. Interacts with HOOK2. Interacts with ZFC3H1 in a RNase-sensitive manner. Expressed in hippocampal pyramidal neurons (at protein level). Expressed in kidney, liver, muscle, heart brain and testes. Expressed in hippocampal pyramidal neurons.

Its subcellular location is the nucleus speckle. In terms of biological role, RNA-binding protein involved in the biogenesis of circular RNAs (circRNAs), which are produced by back-splicing circularization of pre-mRNAs. Acts by binding to both exon-intron boundary and 3'-UTR of pre-mRNAs to promote circRNA biogenesis through dimerization and the association with the spliceosome. Required for spermatogenesis via involvement in circRNA biogenesis. Regulates the pre-mRNA processing of ATP5MC1; preventing its degradation. Also binds the poly(A) tail of mRNAs; controlling poly(A) length in neuronal cells. The chain is Zinc finger CCCH domain-containing protein 14 from Mus musculus (Mouse).